The following is a 174-amino-acid chain: Nucleoside-triphosphatase THEP1 (174 aa).

ATP-binding positions include 7–14 (GRPGVGKT) and 94–101 (LIIIDEIG).

The protein belongs to the THEP1 NTPase family.

The catalysed reaction is a ribonucleoside 5'-triphosphate + H2O = a ribonucleoside 5'-diphosphate + phosphate + H(+). Its function is as follows. Has nucleotide phosphatase activity towards ATP, GTP, CTP, TTP and UTP. May hydrolyze nucleoside diphosphates with lower efficiency. This Thermotoga sp. (strain RQ2) protein is Nucleoside-triphosphatase THEP1.